A 70-amino-acid chain; its full sequence is Phycobilisome 8.1 kDa linker polypeptide, phycocyanin-associated, rod (70 aa).

The 59-residue stretch at 5–63 (SRSFQVEVSGLHQNEVTNQNNYPIRSSGSVFITIPFSRFNEELQRINRLGGKIVNIQPL) folds into the CpcD-like domain.

This sequence belongs to the phycobilisome linker protein family.

The protein localises to the cellular thylakoid membrane. Its function is as follows. Rod linker protein, associated with phycocyanin. Linker polypeptides determine the state of aggregation and the location of the disk-shaped phycobiliprotein units within the phycobilisome and modulate their spectroscopic properties in order to mediate a directed and optimal energy transfer. In Microchaete diplosiphon (Fremyella diplosiphon), this protein is Phycobilisome 8.1 kDa linker polypeptide, phycocyanin-associated, rod (cpcD3).